A 1104-amino-acid polypeptide reads, in one-letter code: Carbamoyl phosphate synthase large chain (1104 aa).

The tract at residues 1–402 is carboxyphosphate synthetic domain; that stretch reads MPRRTDLKSV…ALQKALRSTE (402 aa). Arg129, Arg169, Gly175, Gly176, Glu208, Ile210, Glu215, Gly241, Val242, His243, Gln285, and Glu299 together coordinate ATP. Residues 133–328 enclose the ATP-grasp 1 domain; that stretch reads KGVVERCGAE…IAKIAARLAV (196 aa). The Mg(2+) site is built by Gln285, Glu299, and Asn301. The Mn(2+) site is built by Gln285, Glu299, and Asn301. The interval 403–547 is oligomerization domain; that stretch reads KRGATFSWAG…YSSYDEEDET (145 aa). The carbamoyl phosphate synthetic domain stretch occupies residues 548–948; the sequence is RPREKAAIVI…AFGKSQTAAY (401 aa). Residues 676-867 enclose the ATP-grasp 2 domain; that stretch reads GQVLERAGLV…LAKAAARLMA (192 aa). The ATP site is built by Arg712, Arg751, Leu753, Glu758, Gly783, Ile784, His785, Ser786, Gln826, and Glu838. Mg(2+)-binding residues include Gln826, Glu838, and Asn840. Residues Gln826, Glu838, and Asn840 each coordinate Mn(2+). One can recognise an MGS-like domain in the interval 949–1099; sequence GGLPTAGTAF…QEHTARLNAA (151 aa). Residues 949 to 1104 are allosteric domain; it reads GGLPTAGTAF…RLNAAWEGRA (156 aa).

This sequence belongs to the CarB family. In terms of assembly, composed of two chains; the small (or glutamine) chain promotes the hydrolysis of glutamine to ammonia, which is used by the large (or ammonia) chain to synthesize carbamoyl phosphate. Tetramer of heterodimers (alpha,beta)4. It depends on Mg(2+) as a cofactor. Mn(2+) serves as cofactor.

The catalysed reaction is hydrogencarbonate + L-glutamine + 2 ATP + H2O = carbamoyl phosphate + L-glutamate + 2 ADP + phosphate + 2 H(+). It catalyses the reaction hydrogencarbonate + NH4(+) + 2 ATP = carbamoyl phosphate + 2 ADP + phosphate + 2 H(+). The protein operates within amino-acid biosynthesis; L-arginine biosynthesis; carbamoyl phosphate from bicarbonate: step 1/1. It functions in the pathway pyrimidine metabolism; UMP biosynthesis via de novo pathway; (S)-dihydroorotate from bicarbonate: step 1/3. Its function is as follows. Large subunit of the glutamine-dependent carbamoyl phosphate synthetase (CPSase). CPSase catalyzes the formation of carbamoyl phosphate from the ammonia moiety of glutamine, carbonate, and phosphate donated by ATP, constituting the first step of 2 biosynthetic pathways, one leading to arginine and/or urea and the other to pyrimidine nucleotides. The large subunit (synthetase) binds the substrates ammonia (free or transferred from glutamine from the small subunit), hydrogencarbonate and ATP and carries out an ATP-coupled ligase reaction, activating hydrogencarbonate by forming carboxy phosphate which reacts with ammonia to form carbamoyl phosphate. The polypeptide is Carbamoyl phosphate synthase large chain (Kineococcus radiotolerans (strain ATCC BAA-149 / DSM 14245 / SRS30216)).